Reading from the N-terminus, the 780-residue chain is Zinc finger protein GLIS3 (780 aa).

2 stretches are compositionally biased toward polar residues: residues 80–92 and 106–115; these read PSLS…QNGT and VSGNSVSNSL. Disordered regions lie at residues 80-148 and 290-315; these read PSLS…KKRA and PSAL…HLHH. Residues 135-148 show a composition bias toward basic residues; sequence SATRAHSTRSKKRA. Over residues 293–308 the composition is skewed to pro residues; the sequence is LPLPLPPPQGPPPPYH. The C2H2-type 1 zinc-finger motif lies at 345–370; sequence HCCRWIDCSALYDQQEELVRHIEKVH. A C2H2-type 2; atypical zinc finger spans residues 379-406; the sequence is FTCFWTGCPRRYKPFNARYKLLIHMRVH. 3 consecutive C2H2-type zinc fingers follow at residues 412 to 436, 442 to 466, and 472 to 496; these read NKCT…LRSH, YLCQ…QRTH, and YACQ…VKAH. 2 disordered regions span residues 485–512 and 527–670; these read DPSS…SSTE and LQPA…QPNG. The Bipartite nuclear localization signal motif lies at 490–506; the sequence is RKHVKAHSSREQQARKK. Positions 497–512 are enriched in basic and acidic residues; it reads SSREQQARKKLRSSTE. Residues 567 to 577 are compositionally biased toward low complexity; the sequence is HSTRSGTAAGA. Over residues 593–605 the composition is skewed to polar residues; it reads VQGSPHNPSSQLP.

Belongs to the GLI C2H2-type zinc-finger protein family. As to expression, in the embryo, expressed at high levels in the kidney and testis. In the adult, expressed at high levels in the kidney and uterus and at lower levels in the brain, lung, skeletal muscle and pancreas.

Its subcellular location is the nucleus. Its function is as follows. Acts both as a repressor and activator of transcription. Binds to the consensus sequence 5'-GACCACCCAC-3'. This chain is Zinc finger protein GLIS3, found in Mus musculus (Mouse).